Reading from the N-terminus, the 209-residue chain is Octanoyltransferase (209 aa).

The BPL/LPL catalytic domain maps to 30 to 209 (VNEPEIVYLV…IQTEFNKIFT (180 aa)). Substrate is bound by residues 69-76 (RGGKFTFH), 143-145 (AIG), and 156-158 (GVA). Residue Cys-174 is the Acyl-thioester intermediate of the active site.

The protein belongs to the LipB family.

Its subcellular location is the cytoplasm. It carries out the reaction octanoyl-[ACP] + L-lysyl-[protein] = N(6)-octanoyl-L-lysyl-[protein] + holo-[ACP] + H(+). It functions in the pathway protein modification; protein lipoylation via endogenous pathway; protein N(6)-(lipoyl)lysine from octanoyl-[acyl-carrier-protein]: step 1/2. Functionally, catalyzes the transfer of endogenously produced octanoic acid from octanoyl-acyl-carrier-protein onto the lipoyl domains of lipoate-dependent enzymes. Lipoyl-ACP can also act as a substrate although octanoyl-ACP is likely to be the physiological substrate. The protein is Octanoyltransferase of Rickettsia canadensis (strain McKiel).